The chain runs to 202 residues: MNYLAIVGTNSEVSTNRMLLQFMQRHFQAQAQLELYEIRDLPAFYEADDDQVPQEVTSLSDKIRQADGVIIATPEYDHAIPAVLKSALEWISYTSQALTDKPVLIVGASHGALGSSRAQAHLRQILDSPELAARLMPSSEFLLGKSQAAFNRSGQLIDEHKLAELDEIFREFVLFTEMITKLLSERTIIKKDKKYAWQTREA.

It belongs to the NADH-dependent flavin reductase family. As to quaternary structure, NADH:(hydroxy)cinnamate reductase Crd is a heterodimer composed of CrdA and CrdB subunits, encoded by adjacent genes. It depends on FMN as a cofactor.

Functionally, component of the NADH:(hydroxy)cinnamate reductase. CrdA is probably reduced by NADH and then transfers the electrons to the catalytic center of CrdB. Is likely involved in protecting V.ruber from (hydroxy)cinnamate poisoning. This is NADH:(hydroxy)cinnamate reductase subunit CrdA from Vibrio ruber (strain DSM 16370 / JCM 11486 / BCRC 17186 / CECT 7878 / LMG 23124 / VR1).